A 621-amino-acid chain; its full sequence is CEP295 N-terminal-like protein (621 aa).

The interval 142-253 is disordered; it reads GGRARENEPD…RSKGADLERS (112 aa). Over residues 159–170 the composition is skewed to basic residues; the sequence is RSARPPRAKEKH. Residues 171-185 show a composition bias toward basic and acidic residues; it reads RAALSEERSCREELG. Over residues 203-213 the composition is skewed to polar residues; that stretch reads KPQTTKATGRM. Residues 219–229 show a composition bias toward basic and acidic residues; the sequence is PPEKRKGRPEP. Residues 328–359 are a coiled coil; sequence QCTLREKNKWQKELELAFEELFNINRKLKKHL. Disordered regions lie at residues 385-421, 491-529, and 543-586; these read CGAG…ASKT, DQAD…PDMS, and REQR…DRHS. Residues 498–525 adopt a coiled-coil conformation; sequence STASRQRQKAEMEQRRQKQLESLEQMEH. Residues 505-529 show a composition bias toward basic and acidic residues; sequence QKAEMEQRRQKQLESLEQMEHPDMS. Positions 568–578 are enriched in polar residues; it reads ELSTTSPSGTS.

The protein resides in the cell projection. Its subcellular location is the cilium. The sequence is that of CEP295 N-terminal-like protein from Homo sapiens (Human).